We begin with the raw amino-acid sequence, 158 residues long: NADH-quinone oxidoreductase subunit B (158 aa).

Cys-37, Cys-38, Cys-102, and Cys-132 together coordinate [4Fe-4S] cluster.

Belongs to the complex I 20 kDa subunit family. NDH-1 is composed of 14 different subunits. Subunits NuoB, C, D, E, F, and G constitute the peripheral sector of the complex. The cofactor is [4Fe-4S] cluster.

It is found in the cell inner membrane. The catalysed reaction is a quinone + NADH + 5 H(+)(in) = a quinol + NAD(+) + 4 H(+)(out). NDH-1 shuttles electrons from NADH, via FMN and iron-sulfur (Fe-S) centers, to quinones in the respiratory chain. Couples the redox reaction to proton translocation (for every two electrons transferred, four hydrogen ions are translocated across the cytoplasmic membrane), and thus conserves the redox energy in a proton gradient. The protein is NADH-quinone oxidoreductase subunit B of Bordetella petrii (strain ATCC BAA-461 / DSM 12804 / CCUG 43448).